The sequence spans 422 residues: Proline--tRNA ligase (422 aa).

It belongs to the class-II aminoacyl-tRNA synthetase family. ProS type 2 subfamily. Homodimer.

The protein localises to the cytoplasm. The catalysed reaction is tRNA(Pro) + L-proline + ATP = L-prolyl-tRNA(Pro) + AMP + diphosphate. In terms of biological role, catalyzes the attachment of proline to tRNA(Pro) in a two-step reaction: proline is first activated by ATP to form Pro-AMP and then transferred to the acceptor end of tRNA(Pro). This chain is Proline--tRNA ligase, found in Wolbachia pipientis wMel.